Here is a 332-residue protein sequence, read N- to C-terminus: tRNA U34 carboxymethyltransferase (332 aa).

Carboxy-S-adenosyl-L-methionine-binding positions include Lys96, Trp110, Lys115, Gly135, 186–187 (LE), Met204, Tyr208, and Arg323.

The protein belongs to the class I-like SAM-binding methyltransferase superfamily. CmoB family. Homotetramer.

The enzyme catalyses carboxy-S-adenosyl-L-methionine + 5-hydroxyuridine(34) in tRNA = 5-carboxymethoxyuridine(34) in tRNA + S-adenosyl-L-homocysteine + H(+). Functionally, catalyzes carboxymethyl transfer from carboxy-S-adenosyl-L-methionine (Cx-SAM) to 5-hydroxyuridine (ho5U) to form 5-carboxymethoxyuridine (cmo5U) at position 34 in tRNAs. The chain is tRNA U34 carboxymethyltransferase from Hydrogenovibrio crunogenus (strain DSM 25203 / XCL-2) (Thiomicrospira crunogena).